The following is a 398-amino-acid chain: CCA-adding enzyme (398 aa).

ATP is bound by residues Gly32 and Arg35. 2 residues coordinate CTP: Gly32 and Arg35. Asp45 and Asp47 together coordinate Mg(2+). Residues Arg119, Asp162, Arg165, Arg168, and Arg171 each contribute to the ATP site. CTP is bound by residues Arg119, Asp162, Arg165, Arg168, and Arg171.

This sequence belongs to the tRNA nucleotidyltransferase/poly(A) polymerase family. Bacterial CCA-adding enzyme type 3 subfamily. In terms of assembly, homodimer. Mg(2+) is required as a cofactor.

It catalyses the reaction a tRNA precursor + 2 CTP + ATP = a tRNA with a 3' CCA end + 3 diphosphate. The enzyme catalyses a tRNA with a 3' CCA end + 2 CTP + ATP = a tRNA with a 3' CCACCA end + 3 diphosphate. Catalyzes the addition and repair of the essential 3'-terminal CCA sequence in tRNAs without using a nucleic acid template. Adds these three nucleotides in the order of C, C, and A to the tRNA nucleotide-73, using CTP and ATP as substrates and producing inorganic pyrophosphate. tRNA 3'-terminal CCA addition is required both for tRNA processing and repair. Also involved in tRNA surveillance by mediating tandem CCA addition to generate a CCACCA at the 3' terminus of unstable tRNAs. While stable tRNAs receive only 3'-terminal CCA, unstable tRNAs are marked with CCACCA and rapidly degraded. This is CCA-adding enzyme from Lactococcus lactis subsp. lactis (strain IL1403) (Streptococcus lactis).